Here is a 783-residue protein sequence, read N- to C-terminus: Endonuclease MutS2 (783 aa).

An ATP-binding site is contributed by glycine 328–threonine 335. The region spanning leucine 708–glycine 783 is the Smr domain.

The protein belongs to the DNA mismatch repair MutS family. MutS2 subfamily. In terms of assembly, homodimer. Binds to stalled ribosomes, contacting rRNA.

Endonuclease that is involved in the suppression of homologous recombination and thus may have a key role in the control of bacterial genetic diversity. In terms of biological role, acts as a ribosome collision sensor, splitting the ribosome into its 2 subunits. Detects stalled/collided 70S ribosomes which it binds and splits by an ATP-hydrolysis driven conformational change. Acts upstream of the ribosome quality control system (RQC), a ribosome-associated complex that mediates the extraction of incompletely synthesized nascent chains from stalled ribosomes and their subsequent degradation. Probably generates substrates for RQC. In Streptococcus thermophilus (strain ATCC BAA-250 / LMG 18311), this protein is Endonuclease MutS2.